A 202-amino-acid chain; its full sequence is V-type ATP synthase subunit D (202 aa).

The protein belongs to the V-ATPase D subunit family.

Its function is as follows. Produces ATP from ADP in the presence of a proton gradient across the membrane. This Borreliella burgdorferi (strain ATCC 35210 / DSM 4680 / CIP 102532 / B31) (Borrelia burgdorferi) protein is V-type ATP synthase subunit D (atpD).